Consider the following 603-residue polypeptide: Mono(2-hydroxyethyl) terephthalate hydrolase (603 aa).

The signal sequence occupies residues 1–17 (MQTTVTTMLLASVALAA). A lipid anchor (N-palmitoyl cysteine) is attached at Cys-18. A lipid anchor (S-diacylglycerol cysteine) is attached at Cys-18. Residues 24–44 (TPLPLPQQQPPQQEPPPPPVP) form a disordered region. Pro residues predominate over residues 26 to 44 (LPLPQQQPPQQEPPPPPVP). The cysteines at positions 51 and 92 are disulfide-linked. Gly-132 provides a ligand contact to 4-[(2-hydroxyethoxy)carbonyl]benzoate. Intrachain disulfides connect Cys-224-Cys-529, Cys-303-Cys-320, Cys-340-Cys-348, and Cys-577-Cys-599. The active-site Acyl-ester intermediate is the Ser-225. Glu-226 provides a ligand contact to 4-[(2-hydroxyethoxy)carbonyl]benzoate. Residues Asp-304, Asp-307, Leu-309, Asp-311, and Ile-313 each contribute to the Ca(2+) site. 4-[(2-hydroxyethoxy)carbonyl]benzoate contacts are provided by Arg-411 and Ser-416. Residues Asp-492 and His-528 each act as charge relay system in the active site. His-528 serves as a coordination point for 4-[(2-hydroxyethoxy)carbonyl]benzoate.

The protein belongs to the tannase family.

It localises to the cell outer membrane. It catalyses the reaction 4-[(2-hydroxyethoxy)carbonyl]benzoate + H2O = terephthalate + ethylene glycol + H(+). Functionally, involved in the degradation and assimilation of the plastic poly(ethylene terephthalate) (PET), which allows I.sakaiensis to use PET as its major energy and carbon source for growth. Likely acts synergistically with PETase to depolymerize PET. Catalyzes the hydrolysis of mono(2-hydroxyethyl) terephthalate (MHET) into its two environmentally benign monomers, terephthalate and ethylene glycol. Does not show activity against PET, bis(hydroxyethyl) terephthalate (BHET), pNP-aliphatic esters or typical aromatic ester compounds catalyzed by the tannase family enzymes, such as ethyl gallate and ethyl ferulate. The chain is Mono(2-hydroxyethyl) terephthalate hydrolase from Piscinibacter sakaiensis (Ideonella sakaiensis).